The chain runs to 185 residues: Ribosome-recycling factor (185 aa).

This sequence belongs to the RRF family.

It localises to the cytoplasm. Functionally, responsible for the release of ribosomes from messenger RNA at the termination of protein biosynthesis. May increase the efficiency of translation by recycling ribosomes from one round of translation to another. The chain is Ribosome-recycling factor from Carboxydothermus hydrogenoformans (strain ATCC BAA-161 / DSM 6008 / Z-2901).